Reading from the N-terminus, the 59-residue chain is Large ribosomal subunit protein bL32 (59 aa).

It belongs to the bacterial ribosomal protein bL32 family.

This is Large ribosomal subunit protein bL32 from Malacoplasma penetrans (strain HF-2) (Mycoplasma penetrans).